A 600-amino-acid chain; its full sequence is MNIKFNLIIIILFILFISNVNCKKIKNKKHLTPQRLRRFVEHSKPISLNKKVWKITEIENIFSAQIELTFGIRQRNIVELEDFVWRVSDPNDSLYGSYKTFEEIKEWVKPLDESIDAVKNWLIENDINEFTVTKSGDFIRTIVSIDKAEELLSVRYNKMVHKLSKQSFFRSLDPYTIPRELYDHIDFIGGVNHLPLLSPRPKESSGSAGGGGGGKVNGIGYELESLRNNKQIKSFNDKKVAARNGDPYLSPDLIRKEMNVSQTSTNSTHLGNSQAIAQFLKEYFSPSDLKIFQYRFGLEPSQVDNIIGPNQNLNPGIETALDIQYIMAMAPDVPTWIVSTGGLHEGQEPFLDWLVDLSSNPKLPLVHSISYGDDESSIGLAYTDRVDTEFKKYAAMGRTIVFSSGDFGVGCNDDCDSFSPGWPASSRFVLAVGGVIKKKDGSIIGDEISGGGFSNYFSRPWYQVDECSSYIEWLNGSLSSFYNQSGRGFPDISSFSENVVILYKDKLMPIGGTSASAPIIAGLLSLINDQRLQKNQSPIGLFNPLLYKIARDHPNSFLDIDFGENNYKCCTNGFKSKSGWDPVTGLGLPNFDELVKYCLE.

Residues 1–22 form the signal peptide; it reads MNIKFNLIIIILFILFISNVNC. The propeptide at 23-220 is removed in mature form; the sequence is KKIKNKKHLT…GGGGKVNGIG (198 aa). Asn-91, Asn-259, and Asn-266 each carry an N-linked (GlcNAc...) asparagine glycan. The Peptidase S53 domain maps to 248–600; the sequence is YLSPDLIRKE…FDELVKYCLE (353 aa). Active-site charge relay system residues include Glu-318 and Asp-322. A disulfide bridge connects residues Cys-411 and Cys-570. N-linked (GlcNAc...) asparagine glycosylation is found at Asn-475 and Asn-483. Residue Ser-514 is the Charge relay system of the active site. Residues Asp-559, Ile-560, Gly-579, and Asp-581 each contribute to the Ca(2+) site.

As to quaternary structure, monomer. The cofactor is Ca(2+). Activated by autocatalytic proteolytical processing upon acidification. N-glycosylation is required for processing and activity.

Its subcellular location is the secreted. It catalyses the reaction Release of an N-terminal tripeptide from a polypeptide, but also has endopeptidase activity.. Its function is as follows. Serine protease with tripeptidyl-peptidase I activity. The polypeptide is Tripeptidyl-peptidase 1 (tpp1) (Dictyostelium discoideum (Social amoeba)).